A 280-amino-acid polypeptide reads, in one-letter code: Virginiamycin B lyase (280 aa).

Position 215 (His-215) interacts with substrate. Glu-254 is a Mg(2+) binding site. His-256 acts as the Proton acceptor in catalysis. Position 271 (Glu-271) interacts with Mg(2+).

The protein belongs to the Vgb family. In terms of assembly, monomer. Mg(2+) is required as a cofactor.

Functionally, inactivates the type B streptogramin antibiotics by linearizing the lactone ring at the ester linkage, generating a free phenylglycine carboxylate and converting the threonyl moiety into 2-amino-butenoic acid. In Mycobacterium sp. (strain JLS), this protein is Virginiamycin B lyase.